We begin with the raw amino-acid sequence, 137 residues long: Large ribosomal subunit protein uL16 (137 aa).

This sequence belongs to the universal ribosomal protein uL16 family. As to quaternary structure, part of the 50S ribosomal subunit.

Functionally, binds 23S rRNA and is also seen to make contacts with the A and possibly P site tRNAs. In Dinoroseobacter shibae (strain DSM 16493 / NCIMB 14021 / DFL 12), this protein is Large ribosomal subunit protein uL16.